We begin with the raw amino-acid sequence, 327 residues long: FERM domain-containing protein 6 (327 aa).

In terms of domain architecture, FERM spans 16–320 (RRVCIFLPND…NSHRLYMNLQ (305 aa)).

The protein localises to the cytoplasm. It localises to the cell membrane. This chain is FERM domain-containing protein 6 (Frmd6), found in Rattus norvegicus (Rat).